Here is a 487-residue protein sequence, read N- to C-terminus: Cytochrome P450 720B2 (487 aa).

A helical transmembrane segment spans residues 14 to 34 (WLVGLLCLVLGFLLLQLYKLV). Heme is bound at residue C436.

The protein belongs to the cytochrome P450 family. Heme serves as cofactor.

It is found in the membrane. This is Cytochrome P450 720B2 (CYP720B2) from Pinus taeda (Loblolly pine).